We begin with the raw amino-acid sequence, 121 residues long: Small ribosomal subunit protein uS13 (121 aa).

The disordered stretch occupies residues lysine 93–lysine 121.

This sequence belongs to the universal ribosomal protein uS13 family. In terms of assembly, part of the 30S ribosomal subunit. Forms a loose heterodimer with protein S19. Forms two bridges to the 50S subunit in the 70S ribosome.

Located at the top of the head of the 30S subunit, it contacts several helices of the 16S rRNA. In the 70S ribosome it contacts the 23S rRNA (bridge B1a) and protein L5 of the 50S subunit (bridge B1b), connecting the 2 subunits; these bridges are implicated in subunit movement. Contacts the tRNAs in the A and P-sites. The sequence is that of Small ribosomal subunit protein uS13 from Burkholderia ambifaria (strain ATCC BAA-244 / DSM 16087 / CCUG 44356 / LMG 19182 / AMMD) (Burkholderia cepacia (strain AMMD)).